We begin with the raw amino-acid sequence, 249 residues long: DNA polymerase sliding clamp (249 aa).

This sequence belongs to the PCNA family. As to quaternary structure, homotrimer. The subunits circularize to form a toroid; DNA passes through its center. Replication factor C (RFC) is required to load the toroid on the DNA.

Its function is as follows. Sliding clamp subunit that acts as a moving platform for DNA processing. Responsible for tethering the catalytic subunit of DNA polymerase and other proteins to DNA during high-speed replication. This Thermococcus gammatolerans (strain DSM 15229 / JCM 11827 / EJ3) protein is DNA polymerase sliding clamp.